Consider the following 362-residue polypeptide: CLIP domain-containing serine protease B10 (362 aa).

The signal sequence occupies residues 1–19; the sequence is MAKVVDCVLLLAFIAVVRG. The 54-residue stretch at 22–75 folds into the Clip domain; the sequence is ACRTPDHRDGVCHPVQQCPSVRDEFFNSDRVLSEDEIDYLRKLQCKTKDVTICC. 3 cysteine pairs are disulfide-bonded: Cys-23–Cys-74, Cys-33–Cys-66, and Cys-39–Cys-75. The Peptidase S1 domain maps to 110–361; that stretch reads IIGGNYTAID…YLDWIRQNIR (252 aa). A glycan (N-linked (GlcNAc...) asparagine) is linked at Asn-114. Cys-140 and Cys-156 are joined by a disulfide. Catalysis depends on charge relay system residues His-155 and Asp-220. Asn-254 is a glycosylation site (N-linked (GlcNAc...) asparagine). Intrachain disulfides connect Cys-285–Cys-300 and Cys-310–Cys-337. Ser-314 (charge relay system) is an active-site residue.

This sequence belongs to the peptidase S1 family. CLIP subfamily. Forms a covalent heterodimer with SRPN2; the interaction inhibits CLIPB10 catalytic activity. Post-translationally, cleaved by an unknown protease into an active form.

It localises to the secreted. Inhibited by serpin SRPN2. Serine protease which preferentially cleaves after arginine residues. Involved in the innate immune response against parasite P.bergei infection by activating the melanization cascade. Probably in the hemolymph, cleaves and activates prophenoloxidase (PPO), which functions in the formation of pigments such as melanin and other polyphenolic compounds. In the susceptible strain G3, appears to be dispensable for ookinete elimination which occurs by lysis. This is CLIP domain-containing serine protease B10 from Anopheles gambiae (African malaria mosquito).